A 375-amino-acid chain; its full sequence is Putative prophage phiRv2 integrase (375 aa).

Positions 75–153 (APFGEYAEGW…LLRAIMQTAL (79 aa)) constitute a Core-binding (CB) domain. The Tyr recombinase domain maps to 175–364 (HKIRPATLDE…AKGRDREIAA (190 aa)). Active-site residues include Arg-209, His-316, Arg-319, and His-342. Residue Tyr-351 is the O-(3'-phospho-DNA)-tyrosine intermediate of the active site.

It belongs to the 'phage' integrase family.

Integrase is necessary for integration of the phage into the host genome by site-specific recombination. In conjunction with excisionase, integrase is also necessary for excision of the prophage from the host genome. In Mycobacterium tuberculosis (strain CDC 1551 / Oshkosh), this protein is Putative prophage phiRv2 integrase.